We begin with the raw amino-acid sequence, 229 residues long: UPF0500 protein C1orf216 (229 aa).

The tract at residues 1-144 (MFAIQPGLAE…RGPGPPDPLL (144 aa)) is disordered. The segment covering 62-71 (SESPSDNQAF) has biased composition (polar residues). Low complexity-rich tracts occupy residues 84-93 (PPEGAEIPGA) and 115-126 (SSSLSIDSRSSS).

It belongs to the UPF0500 family.

This chain is UPF0500 protein C1orf216 (C1orf216), found in Homo sapiens (Human).